The chain runs to 738 residues: MLQGMPKRSGSISELHDPFSSPDVYYGPATDPRRQKQPNKYSRTRTMSIIENVSTFKSAGKQYNIRRRGSEDDSMLASSGHRKFYIKDVDKTLEELLESEDTDGNYQITIEDRGPKTLRVGTANSNGFRHVQIRGTYMLSNLLQELTIAKNFGRKQVILDEARLNEDPVNRLTRLITHQFWDSLTRRIDYNSIAAIAADTKVDTPGAKVPRIYVPHGCPEQYEYFIECSQLNPSLNLEVKYLPDVITPEHVQSLNESPGLLALAMESHRDPITGESTLVGFPYVVPGGRFNELYGWDSYLMALGLLDCNKVDIARGMVEHFIFEIEHYGKILNANRSYYLCRSQPPFLTDMALKVFEKFGGDQNPTAVDFLKRAFIAAIKEYKSVWMAEPRYDKTTGLSCYHPDGIGFPPETEPDHFDAICRKFAEKHNVTIPEFRCMYDAGEVHEPELDEFFLHDRAVRESGHDTSYRLENVCAYLATIDLNSLLYKYEKDIAYVVSKYFDDSITDYAGETTTSSHWEALADIRKQRITKYLWDEETGFFYDYNVHIGKRTSYDSATTFWAMWAGLATQEQANAMVEKALPRLEMLGGLVACTEESRGEITMNRPSRQWDYPYGWAPHQMLAWTGLDNYGFTGVARRLAYRWLFLMTKAFVDYNGIVVEKYDVTRGTDPHRVDAEYGNQGADFKGVATEGFGWVNSSYILGLKFMNTYAKRALANCTVPDIFFKHMKPEEKARYALI.

Positions 1 to 44 are disordered; that stretch reads MLQGMPKRSGSISELHDPFSSPDVYYGPATDPRRQKQPNKYSRT. Substrate contacts are provided by residues Arg-289, 296-297, Asn-333, Arg-342, 342-344, and Gly-463; these read WD and RSQ. Active-site proton donor/acceptor residues include Asp-465 and Glu-660.

This sequence belongs to the glycosyl hydrolase 37 family.

It catalyses the reaction alpha,alpha-trehalose + H2O = alpha-D-glucose + beta-D-glucose. The protein is Probable trehalase (NTH2) of Eremothecium gossypii (strain ATCC 10895 / CBS 109.51 / FGSC 9923 / NRRL Y-1056) (Yeast).